Reading from the N-terminus, the 284-residue chain is Nucleotide-binding protein NMC0691 (284 aa).

8–15 lines the ATP pocket; sequence GLSGSGKS. Position 58 to 61 (58 to 61) interacts with GTP; sequence DVRS.

This sequence belongs to the RapZ-like family.

In terms of biological role, displays ATPase and GTPase activities. This is Nucleotide-binding protein NMC0691 from Neisseria meningitidis serogroup C / serotype 2a (strain ATCC 700532 / DSM 15464 / FAM18).